The following is a 215-amino-acid chain: MKLFIDTANVEEIKEVNDMGVICGVTTNPSLVAKEGRDFNEVIREITSIVDGPISGEVIALDAEGMIKEGREIAKIHKNMVVKIPMTEEGLKAVKVLSSEGIKTNVTLIFSAGQALLAARAGATFVSPFLGRLDDIGADSIGLIESIVNIFDIHDIRTEIIAASIRSPKHVIDSAEAGAHIGTVPYKVLKQLIKHPLTDIGIERFMKDWKEAFNK.

The active-site Schiff-base intermediate with substrate is Lys83.

It belongs to the transaldolase family. Type 3B subfamily.

Its subcellular location is the cytoplasm. It carries out the reaction D-sedoheptulose 7-phosphate + D-glyceraldehyde 3-phosphate = D-erythrose 4-phosphate + beta-D-fructose 6-phosphate. The protein operates within carbohydrate degradation; pentose phosphate pathway; D-glyceraldehyde 3-phosphate and beta-D-fructose 6-phosphate from D-ribose 5-phosphate and D-xylulose 5-phosphate (non-oxidative stage): step 2/3. Functionally, transaldolase is important for the balance of metabolites in the pentose-phosphate pathway. In Clostridium acetobutylicum (strain ATCC 824 / DSM 792 / JCM 1419 / IAM 19013 / LMG 5710 / NBRC 13948 / NRRL B-527 / VKM B-1787 / 2291 / W), this protein is Probable transaldolase (tal).